The following is a 195-amino-acid chain: Holliday junction branch migration complex subunit RuvA (195 aa).

Residues 1–66 form a domain I region; sequence MNYLVFKVIY…LIIKDLYGFR (66 aa). The tract at residues 67–141 is domain II; it reads TYNERLLFID…KYINKVSEKN (75 aa). Position 141 (Asn-141) is a region of interest, flexible linker. The interval 141–195 is domain III; that stretch reads NPWAKELSIGLENLGYDKKDIEYAITKVKVDTQQNIDISEIIGCAIKEISLRHEN.

It belongs to the RuvA family. In terms of assembly, homotetramer. Forms an RuvA(8)-RuvB(12)-Holliday junction (HJ) complex. HJ DNA is sandwiched between 2 RuvA tetramers; dsDNA enters through RuvA and exits via RuvB. An RuvB hexamer assembles on each DNA strand where it exits the tetramer. Each RuvB hexamer is contacted by two RuvA subunits (via domain III) on 2 adjacent RuvB subunits; this complex drives branch migration. In the full resolvosome a probable DNA-RuvA(4)-RuvB(12)-RuvC(2) complex forms which resolves the HJ.

Its subcellular location is the cytoplasm. Its function is as follows. The RuvA-RuvB-RuvC complex processes Holliday junction (HJ) DNA during genetic recombination and DNA repair, while the RuvA-RuvB complex plays an important role in the rescue of blocked DNA replication forks via replication fork reversal (RFR). RuvA specifically binds to HJ cruciform DNA, conferring on it an open structure. The RuvB hexamer acts as an ATP-dependent pump, pulling dsDNA into and through the RuvAB complex. HJ branch migration allows RuvC to scan DNA until it finds its consensus sequence, where it cleaves and resolves the cruciform DNA. In Ureaplasma urealyticum serovar 10 (strain ATCC 33699 / Western), this protein is Holliday junction branch migration complex subunit RuvA.